The chain runs to 131 residues: Bacteriohemerythrin (131 aa).

Fe cation contacts are provided by H20, E23, H56, E60, H75, H79, H117, and D122.

Belongs to the hemerythrin family. As to quaternary structure, monomer.

Oxygen-binding protein. May be involved in a storage mechanism or for delivery to oxygen-requiring enzymes. The oxygen-binding site contains two iron atoms. This Aquifex aeolicus (strain VF5) protein is Bacteriohemerythrin.